Reading from the N-terminus, the 137-residue chain is Small ribosomal subunit protein uS11A (137 aa).

Position 2 is an N-acetylserine (Ser-2). The tract at residues 117-137 (DVTPVPSDSTRKKGGRRGRRL) is disordered. A compositionally biased stretch (basic residues) spans 128-137 (KKGGRRGRRL).

It belongs to the universal ribosomal protein uS11 family. Component of the small ribosomal subunit (SSU). Mature yeast ribosomes consist of a small (40S) and a large (60S) subunit. The 40S small subunit contains 1 molecule of ribosomal RNA (18S rRNA) and 33 different proteins (encoded by 57 genes). The large 60S subunit contains 3 rRNA molecules (25S, 5.8S and 5S rRNA) and 46 different proteins (encoded by 81 genes). uS11 interacts with eS1 forming part of the mRNA exit tunnel. uS11 interacts with snoRNA U3. uS11 interacts with MPP10. Component of the ribosomal small subunit (SSU) processome composed of at least 40 protein subunits and snoRNA U3. N-terminally acetylated by acetyltransferase NatA.

The protein localises to the cytoplasm. It localises to the nucleus. It is found in the nucleolus. In terms of biological role, component of the ribosome, a large ribonucleoprotein complex responsible for the synthesis of proteins in the cell. The small ribosomal subunit (SSU) binds messenger RNAs (mRNAs) and translates the encoded message by selecting cognate aminoacyl-transfer RNA (tRNA) molecules. The large subunit (LSU) contains the ribosomal catalytic site termed the peptidyl transferase center (PTC), which catalyzes the formation of peptide bonds, thereby polymerizing the amino acids delivered by tRNAs into a polypeptide chain. The nascent polypeptides leave the ribosome through a tunnel in the LSU and interact with protein factors that function in enzymatic processing, targeting, and the membrane insertion of nascent chains at the exit of the ribosomal tunnel. uS11 is involved in nucleolar processing of pre-18S ribosomal RNA and ribosome assembly. The sequence is that of Small ribosomal subunit protein uS11A from Saccharomyces cerevisiae (strain ATCC 204508 / S288c) (Baker's yeast).